A 765-amino-acid polypeptide reads, in one-letter code: Putative chloride channel-like protein CLC-g (765 aa).

The next 12 membrane-spanning stretches (helical) occupy residues 67–87 (VFMK…IGFA), 116–136 (FVVF…ITAF), 167–187 (LIIK…IGKA), 190–210 (MVHT…KRYR), 232–252 (GAAA…LFAL), 262–282 (ALLW…RALI), 315–335 (VLPV…YNFL), 355–375 (ILLA…LPFL), 438–458 (FSVL…YGIV), 462–482 (GLFV…GMLL), 494–514 (AVLG…STCV), and 515–535 (ILLE…VLLI). Positions 568–640 (MRQLLVGDVV…LLKKRVFMPS (73 aa)) constitute a CBS 1 domain. A Phosphoserine modification is found at serine 646. In terms of domain architecture, CBS 2 spans 687–748 (FSNASPYTVV…PEHILGLHPS (62 aa)). Residues 715 to 735 (HLLVIPKTSNRPPVVGILTRH) traverse the membrane as a helical segment.

Belongs to the chloride channel (TC 2.A.49) family. Homodimer. Interacts with PP2A5.

The protein resides in the membrane. Its function is as follows. Putative voltage-gated chloride channel. This chain is Putative chloride channel-like protein CLC-g (CLC-G), found in Arabidopsis thaliana (Mouse-ear cress).